Reading from the N-terminus, the 116-residue chain is Protein Rev (116 aa).

S5 and S8 each carry phosphoserine; by host CK2. Residues 18–26 (LIKVLYQSN) form a homomultimerization region. A disordered region spans residues 23 to 48 (YQSNPPPSSEGTRQARRNRRRRWRER). The Nuclear localization signal and RNA-binding (RRE) signature appears at 34 to 50 (TRQARRNRRRRWRERQR). Residues 36-47 (QARRNRRRRWRE) are compositionally biased toward basic residues. The Nuclear export signal and binding to XPO1 signature appears at 73-84 (FQLPPLERLTLD). The segment at 90-116 (GTSGTQGVGSPQILVESPPVLDSGTKE) is disordered. Residues S92 and S99 each carry the phosphoserine; by host modification.

It belongs to the HIV-1 REV protein family. As to quaternary structure, homomultimer; when bound to the RRE. Multimeric assembly is essential for activity and may involve XPO1. Binds to human KPNB1, XPO1, TNPO1, RANBP5 and IPO7. Interacts with the viral Integrase. Interacts with human KHDRBS1. Interacts with human NAP1; this interaction decreases Rev multimerization and stimulates its activity. Interacts with human DEAD-box helicases DDX3 and DDX24; these interactions may serve for viral RNA export to the cytoplasm and packaging, respectively. Interacts with human PSIP1; this interaction may inhibit HIV-1 DNA integration by promoting dissociation of the Integrase-LEDGF/p75 complex. In terms of processing, asymmetrically arginine dimethylated at one site by host PRMT6. Methylation impairs the RNA-binding activity and export of viral RNA from the nucleus to the cytoplasm. Phosphorylated by protein kinase CK2. Presence of, and maybe binding to the N-terminus of the regulatory beta subunit of CK2 is necessary for CK2-mediated Rev's phosphorylation.

It is found in the host nucleus. The protein localises to the host nucleolus. It localises to the host cytoplasm. In terms of biological role, escorts unspliced or incompletely spliced viral pre-mRNAs (late transcripts) out of the nucleus of infected cells. These pre-mRNAs carry a recognition sequence called Rev responsive element (RRE) located in the env gene, that is not present in fully spliced viral mRNAs (early transcripts). This function is essential since most viral proteins are translated from unspliced or partially spliced pre-mRNAs which cannot exit the nucleus by the pathway used by fully processed cellular mRNAs. Rev itself is translated from a fully spliced mRNA that readily exits the nucleus. Rev's nuclear localization signal (NLS) binds directly to KPNB1/Importin beta-1 without previous binding to KPNA1/Importin alpha-1. KPNB1 binds to the GDP bound form of RAN (Ran-GDP) and targets Rev to the nucleus. In the nucleus, the conversion from Ran-GDP to Ran-GTP dissociates Rev from KPNB1 and allows Rev's binding to the RRE in viral pre-mRNAs. Rev multimerization on the RRE via cooperative assembly exposes its nuclear export signal (NES) to the surface. Rev can then form a complex with XPO1/CRM1 and Ran-GTP, leading to nuclear export of the complex. Conversion from Ran-GTP to Ran-GDP mediates dissociation of the Rev/RRE/XPO1/RAN complex, so that Rev can return to the nucleus for a subsequent round of export. Beside KPNB1, also seems to interact with TNPO1/Transportin-1, RANBP5/IPO5 and IPO7/RANBP7 for nuclear import. The nucleoporin-like HRB/RIP is an essential cofactor that probably indirectly interacts with Rev to release HIV RNAs from the perinuclear region to the cytoplasm. This chain is Protein Rev, found in Human immunodeficiency virus type 1 group M subtype B (isolate YU-2) (HIV-1).